We begin with the raw amino-acid sequence, 525 residues long: AP-4 complex accessory subunit Tepsin (525 aa).

The ENTH domain occupies 8 to 141; sequence RDRLSFLHRL…FSDTVLPLAP (134 aa). The segment at 139 to 229 is disordered; it reads LAPSQPLGTP…SHSGASREPG (91 aa). Positions 193–225 are enriched in low complexity; that stretch reads SGPSSQNSSQNSDLSRVSDSGSHSGSDSHSGAS. Residues serine 333 and serine 356 each carry the phosphoserine modification. The interval 355-465 is disordered; sequence LSPARGTSAE…PKRGPSSCAW (111 aa). Low complexity predominate over residues 393 to 412; the sequence is PLSSTPVSSRSPAPSSGMPS. Residues 413–429 are compositionally biased toward pro residues; sequence SPVPTPPPDASPIPAPG. The segment covering 434 to 448 has biased composition (basic and acidic residues); it reads AEARLAESRRWRPER. Positions 467–477 are interaction with AP4B1; it reads RDSLFAGMELV. Residues 487–525 are disordered; that stretch reads AAAGESCPDAPRAPQTSSQRTAAKEPPGSEPSAFAFLNA. The tract at residues 515 to 525 is interaction with AP4E1; sequence SEPSAFAFLNA.

In terms of assembly, interacts with AP4B1 and AP4E1; the interaction is direct and mediates the association of TEPSIN with the adapter-like complex 4 (AP-4), a heterotetramer composed of AP4B1, AP4E1, AP4M1 and AP4S1.

Its subcellular location is the golgi apparatus. It localises to the trans-Golgi network membrane. It is found in the cytoplasmic vesicle. The protein resides in the cytoplasm. The protein localises to the cytosol. Associates with the adapter-like complex 4 (AP-4) and may therefore play a role in vesicular trafficking of proteins at the trans-Golgi network. In Homo sapiens (Human), this protein is AP-4 complex accessory subunit Tepsin.